The chain runs to 98 residues: Large ribosomal subunit protein uL23 (98 aa).

It belongs to the universal ribosomal protein uL23 family. In terms of assembly, part of the 50S ribosomal subunit. Contacts protein L29, and trigger factor when it is bound to the ribosome.

Functionally, one of the early assembly proteins it binds 23S rRNA. One of the proteins that surrounds the polypeptide exit tunnel on the outside of the ribosome. Forms the main docking site for trigger factor binding to the ribosome. This Rickettsia typhi (strain ATCC VR-144 / Wilmington) protein is Large ribosomal subunit protein uL23.